A 586-amino-acid polypeptide reads, in one-letter code: MVGIPGPYQFTGDKRVPAMPGSPMEVKIHSRSSPPIMAPLPPVNPGGLRPVGFPPSSHSNGINHSPPTLNGAPSPPQRSSNGPSSSSSSSLANQQLPATCGVRQLSKLKRFLTTLQQFGNDISPEIGEKVRTLVLALVNSTVTIEEFHCKLQEATNFPLRPFVIPFLKANLPLLQRELLHCARAGKQTPSQYLAQHEHILLNTSTSSPADSSELLMEMNGNGKRHSPDRREEERETAPAEPPVKRVCTISPAPRHSPALSLPLVNSTSHFHPTPPPLQHYSLEDIPSSQLYRDHLNKIGEHRDVRDRHHSSGVNGNLNNGYQEELVDHRLTEREWAEEWKHLDHALNCIMEMVEKTRRSMAVLRRCQEVDRDELNYWKRRFNESNEIRKGSEHPSRQHSPSSTDSGASDSVRDFGSRTGAGYVTDEIWRKAEEAVNEVKRQAMSEVQKAVSEAEQKAFEMIASERARMEQTIVDAKRRAAEDAVLVVNEQEESTESCWNCGRKASETCSGCNIARYCGSFCQHKDWEKHHRICGQSMHTQAKPLTPSRSLIPKASDPVLLSPTLERSSSATSRSSTPASVTAVDGL.

Residues 1-95 form a disordered region; the sequence is MVGIPGPYQF…SSSSSLANQQ (95 aa). Positions 56-68 are enriched in polar residues; it reads SSHSNGINHSPPT. The segment covering 77 to 90 has biased composition (low complexity); that stretch reads QRSSNGPSSSSSSS. Residues 102 to 197 enclose the TAFH domain; it reads VRQLSKLKRF…TPSQYLAQHE (96 aa). Disordered stretches follow at residues 204-242 and 387-417; these read STSS…AEPP and IRKG…FGSR. A compositionally biased stretch (basic and acidic residues) spans 228–237; that stretch reads DRREEERETA. The span at 399 to 409 shows a compositional bias: low complexity; it reads SPSSTDSGASD. A coiled-coil region spans residues 429–481; the sequence is RKAEEAVNEVKRQAMSEVQKAVSEAEQKAFEMIASERARMEQTIVDAKRRAAE. Positions 497, 500, 508, 511, 517, 521, 529, and 533 each coordinate Zn(2+). The MYND-type zinc-finger motif lies at 497–533; the sequence is CWNCGRKASETCSGCNIARYCGSFCQHKDWEKHHRIC. Residues 561–586 are disordered; the sequence is SPTLERSSSATSRSSTPASVTAVDGL. Residues 566 to 586 show a composition bias toward low complexity; it reads RSSSATSRSSTPASVTAVDGL.

It is found in the nucleus. Its function is as follows. May act as a transcriptional corepressor. The sequence is that of Protein CBFA2T2 (cbfa2t2) from Xenopus laevis (African clawed frog).